The following is a 197-amino-acid chain: Recombination protein RecR (197 aa).

The C4-type zinc finger occupies 57–72 (CSVCFGITEEDPCRLC). Positions 79-174 (TSLCVVEEPQ…RVTRLAHGIP (96 aa)) constitute a Toprim domain.

The protein belongs to the RecR family.

Its function is as follows. May play a role in DNA repair. It seems to be involved in an RecBC-independent recombinational process of DNA repair. It may act with RecF and RecO. The protein is Recombination protein RecR of Geobacter metallireducens (strain ATCC 53774 / DSM 7210 / GS-15).